The following is a 177-amino-acid chain: Large ribosomal subunit protein uL6 (177 aa).

It belongs to the universal ribosomal protein uL6 family. As to quaternary structure, part of the 50S ribosomal subunit.

In terms of biological role, this protein binds to the 23S rRNA, and is important in its secondary structure. It is located near the subunit interface in the base of the L7/L12 stalk, and near the tRNA binding site of the peptidyltransferase center. The sequence is that of Large ribosomal subunit protein uL6 from Acinetobacter baylyi (strain ATCC 33305 / BD413 / ADP1).